A 409-amino-acid polypeptide reads, in one-letter code: MAAPQRSGSAALLPSANGAGRAARRTARQVPEELLNNVELREAVGALPSNYNFEIPKTIWRIRQAGAKKVALQMPEGLLMFACTIADIIERFTDAEAVVMGDVTYGACCVDDYTARALGADFLVHYGHSCLIPIDATRGLKMLYVFVDIKIDTSHFLDTIRFNFAVGSSLALVSTIQFVAAVQAASQELQSQYKVCVPQCKPLSPGEILGCTSPRLARDTDAIVYLGDGRFHLESIMIANPGIPAYRYDPYSKVFSQEHYAHDRMHGARQAAIRSAARARCWGLLLGTLGRQGSPAILQHLESRLRALGRPFVRVLLSEIFPSKLQLFDSVDAWVQIACPRLSIDWGEAFSKPLLTPYEAAVALGDIEWQQPYPMDFYASQSLGPWTANHTARPAQEKPPATPSLKKWH.

Residues 1–22 form a disordered region; the sequence is MAAPQRSGSAALLPSANGAGRA. Cysteine 108, cysteine 211, and cysteine 339 together coordinate [4Fe-4S] cluster. The disordered stretch occupies residues 388 to 409; sequence ANHTARPAQEKPPATPSLKKWH.

Belongs to the DPH1/DPH2 family. DPH1 subfamily. In terms of assembly, component of the 2-(3-amino-3-carboxypropyl)histidine synthase complex composed of DPH1, DPH2, DPH3 and a NADH-dependent reductase. [4Fe-4S] cluster is required as a cofactor.

It is found in the nucleus. Its subcellular location is the cytoplasm. The catalysed reaction is L-histidyl-[translation elongation factor 2] + S-adenosyl-L-methionine = 2-[(3S)-amino-3-carboxypropyl]-L-histidyl-[translation elongation factor 2] + S-methyl-5'-thioadenosine + H(+). It participates in protein modification; peptidyl-diphthamide biosynthesis. Its function is as follows. Catalyzes the first step of diphthamide biosynthesis, a post-translational modification of histidine which occurs in elongation factor 2. DPH1 and DPH2 transfer a 3-amino-3-carboxypropyl (ACP) group from S-adenosyl-L-methionine (SAM) to a histidine residue, the reaction is assisted by a reduction system comprising DPH3 and a NADH-dependent reductase. The protein is 2-(3-amino-3-carboxypropyl)histidine synthase subunit 1 (DPH1) of Gallus gallus (Chicken).